The sequence spans 126 residues: Holo-[acyl-carrier-protein] synthase (126 aa).

Mg(2+) is bound by residues D8 and E56.

It belongs to the P-Pant transferase superfamily. AcpS family. Mg(2+) serves as cofactor.

Its subcellular location is the cytoplasm. The enzyme catalyses apo-[ACP] + CoA = holo-[ACP] + adenosine 3',5'-bisphosphate + H(+). In terms of biological role, transfers the 4'-phosphopantetheine moiety from coenzyme A to a Ser of acyl-carrier-protein. In Clostridium tetani (strain Massachusetts / E88), this protein is Holo-[acyl-carrier-protein] synthase.